The sequence spans 403 residues: 3-(3-hydroxy-phenyl)propionate transporter (403 aa).

Residues 1 to 16 are Cytoplasmic-facing; the sequence is MSTRTPSSSSSRLMLT. Residues 17 to 37 form a helical membrane-spanning segment; that stretch reads IGLCFLVALMEGLDLQAAGIA. Topologically, residues 38–53 are periplasmic; it reads AGGIAQAFALDKMQMG. Residues 54 to 74 form a helical membrane-spanning segment; sequence WIFSAGILGLLPGALVGGMLA. The Cytoplasmic segment spans residues 75–81; the sequence is DRYGRKR. A helical transmembrane segment spans residues 82 to 102; the sequence is ILIGSVALFGLFSLATAIAWD. The Periplasmic portion of the chain corresponds to 103 to 105; that stretch reads FPS. Residues 106-126 form a helical membrane-spanning segment; sequence LVFARLMTGVGLGAALPNLIA. At 127 to 142 the chain is on the cytoplasmic side; the sequence is LTSEAAGPRFRGTAVS. The chain crosses the membrane as a helical span at residues 143 to 163; sequence LMYCGVPIGAALAATLGFAGA. Position 164 (N164) is a topological domain, periplasmic. A helical transmembrane segment spans residues 165–185; that stretch reads LAWQTVFWVGGVVPLILVPLL. Residues 186–217 are Cytoplasmic-facing; it reads MRWLPESAVFAGEKQSAPPLRALFAPETATAT. Residues 218 to 238 traverse the membrane as a helical segment; sequence LLLWLCYFFTLLVVYMLINWL. The Periplasmic segment spans residues 239-253; the sequence is PLLLVEQGFQPSQAA. A helical transmembrane segment spans residues 254-274; it reads GVMFALQMGAASGTLMLGALM. Residues 275–279 are Cytoplasmic-facing; the sequence is DKLRP. Residues 280-300 form a helical membrane-spanning segment; the sequence is VTMSLLIYSGMLASLLALGTV. The Periplasmic portion of the chain corresponds to 301–306; the sequence is SSFNGM. Residues 307–327 form a helical membrane-spanning segment; it reads LLAGFVAGLFATGGQSVLYAL. Over 328–339 the chain is Cytoplasmic; it reads APLFYSSQIRAT. A helical membrane pass occupies residues 340-360; that stretch reads GVGTAVAVGRLGAMSGPLLAG. Over 361–369 the chain is Periplasmic; sequence KMLALGTGT. A helical transmembrane segment spans residues 370–390; the sequence is VGVMAASAPGILVAGLAVFIL. At 391 to 403 the chain is on the cytoplasmic side; the sequence is MSRRSRIQPCADA.

It belongs to the major facilitator superfamily. Aromatic acid:H(+) symporter (AAHS) (TC 2.A.1.15) family.

The protein localises to the cell inner membrane. The catalysed reaction is 3-(3-hydroxyphenyl)propanoate(in) + H(+)(in) = 3-(3-hydroxyphenyl)propanoate(out) + H(+)(out). Inhibited by carbonyl cyanide m-chlorophenylhydrazone (CCCP), which dissipates the proton motive force. In terms of biological role, uptake of 3-(3-hydroxyphenyl)propionate (3HPP) across the cytoplasmic membrane. Transport is driven by the proton motive force. Does not transport benzoate, 3-hydroxybenzoate or gentisate. The polypeptide is 3-(3-hydroxy-phenyl)propionate transporter (Escherichia coli (strain K12)).